A 187-amino-acid chain; its full sequence is Auxin-binding protein T92 (187 aa).

An N-terminal signal peptide occupies residues 1-20 (MARHIIILVAVFWFATAEAS). Cys-22 and Cys-177 are disulfide-bonded. The Zn(2+) site is built by His-78, His-80, and Glu-84. An N-linked (GlcNAc...) asparagine glycan is attached at Asn-117. His-128 is a binding site for Zn(2+). The short motif at 184 to 187 (KDEL) is the Prevents secretion from ER element.

In terms of assembly, homodimer.

The protein localises to the endoplasmic reticulum lumen. Its function is as follows. This is probably a receptor for the plant hormone auxin. The sequence is that of Auxin-binding protein T92 (T92) from Nicotiana tabacum (Common tobacco).